The primary structure comprises 259 residues: 14-3-3-like protein (259 aa).

The interval 238–259 (MQDPAAGDDREGADMKVEDAEP) is disordered. Basic and acidic residues predominate over residues 244-259 (GDDREGADMKVEDAEP).

It belongs to the 14-3-3 family.

The chain is 14-3-3-like protein from Chlamydomonas reinhardtii (Chlamydomonas smithii).